We begin with the raw amino-acid sequence, 248 residues long: Ubiquinone/menaquinone biosynthesis C-methyltransferase UbiE (248 aa).

2 residues coordinate S-adenosyl-L-methionine: Ser-68 and Asp-92.

Belongs to the class I-like SAM-binding methyltransferase superfamily. MenG/UbiE family.

The enzyme catalyses a 2-demethylmenaquinol + S-adenosyl-L-methionine = a menaquinol + S-adenosyl-L-homocysteine + H(+). It catalyses the reaction a 2-methoxy-6-(all-trans-polyprenyl)benzene-1,4-diol + S-adenosyl-L-methionine = a 5-methoxy-2-methyl-3-(all-trans-polyprenyl)benzene-1,4-diol + S-adenosyl-L-homocysteine + H(+). It functions in the pathway quinol/quinone metabolism; menaquinone biosynthesis; menaquinol from 1,4-dihydroxy-2-naphthoate: step 2/2. The protein operates within cofactor biosynthesis; ubiquinone biosynthesis. Its function is as follows. Methyltransferase required for the conversion of demethylmenaquinol (DMKH2) to menaquinol (MKH2) and the conversion of 2-polyprenyl-6-methoxy-1,4-benzoquinol (DDMQH2) to 2-polyprenyl-3-methyl-6-methoxy-1,4-benzoquinol (DMQH2). This is Ubiquinone/menaquinone biosynthesis C-methyltransferase UbiE from Rickettsia peacockii (strain Rustic).